Reading from the N-terminus, the 203-residue chain is MAKAYDHLFKLLLIGDSGVGKTCLIIRFAEDSFNNTYISTIGIDFKIRTVDVEGKKIKLQVWDTAGQERFKTITTAYYRGAMGIILVYDITDEKSFENIQNWMKSIKENASAGVERLLLGNKCDMEAKRKVQKEQAIKLAREHGIRFFETSAKSSTNVDEAFSSLARDILLKSGGRRSGNSHKAPGTDLKPCDKKNTSKCSLG.

GTP contacts are provided by serine 17, glycine 18, glycine 20, lysine 21, threonine 22, cysteine 23, and threonine 40. Threonine 22 serves as a coordination point for Mg(2+). Residues 31–45 (DSFNNTYISTIGIDF) carry the Switch 1 motif. Threonine 40 is a Mg(2+) binding site. Glycyl lysine isopeptide (Lys-Gly) (interchain with G-Cter in ubiquitin) cross-links involve residues lysine 46 and lysine 58. Aspartate 63 lines the Mg(2+) pocket. The short motif at 63-80 (DTAGQERFKTITTAYYRG) is the Switch 2 element. Positions 66, 121, 122, 124, 152, and 153 each coordinate GTP. The segment at 173–203 (SGGRRSGNSHKAPGTDLKPCDKKNTSKCSLG) is disordered. At serine 178 the chain carries Phosphoserine. Cysteine 200 bears the Cysteine methyl ester mark. Residue cysteine 200 is the site of S-geranylgeranyl cysteine attachment. The propeptide at 201-203 (SLG) is removed in mature form.

Belongs to the small GTPase superfamily. Rab family. Interacts (GTP-bound form) with MICALL2; competes with RAB8A and is involved in tight junctions assembly. Interacts (GTP-bound form) with MICALL1. Interacts (GTP-bound form) with MICAL1, MICAL3, MICALCL, EHBP1 and EHBP1L1; ternary complexes of RAB8A, RAB13 and either MICAL1 or EHBP1L1 are possible. Interacts with PRKACA; downstream effector of RAB13 involved in tight junction assembly. Interacts with GRB2; may recruit RAB13 to the leading edge of migrating endothelial cells where it can activate RHOA. Interacts (isoprenylated form) with PDE6D; dissociates RAB13 from membranes. Interacts with BICDL2/BICDR2. Interacts with LEPROT and LEPROTL1. Requires Mg(2+) as cofactor. Post-translationally, ubiquitinated via 'Lys-11'-linked ubiquitination on Lys-46 and Lys-58; impairing the recruitment of guanosine diphosphate (GDP) dissociation inhibitor 1/GDI1.

Its subcellular location is the cell membrane. The protein resides in the cytoplasmic vesicle membrane. It is found in the cell junction. The protein localises to the tight junction. It localises to the golgi apparatus. Its subcellular location is the trans-Golgi network membrane. The protein resides in the recycling endosome membrane. It is found in the cell projection. The protein localises to the lamellipodium. The enzyme catalyses GTP + H2O = GDP + phosphate + H(+). Regulated by guanine nucleotide exchange factors (GEFs) including DENND1C, which promote the exchange of bound GDP for free GTP. Regulated by GTPase activating proteins (GAPs) which increase the GTP hydrolysis activity. Inhibited by GDP dissociation inhibitors (GDIs). Activated in response to insulin. Functionally, the small GTPases Rab are key regulators of intracellular membrane trafficking, from the formation of transport vesicles to their fusion with membranes. Rabs cycle between an inactive GDP-bound form and an active GTP-bound form that is able to recruit to membranes different sets of downstream effectors directly responsible for vesicle formation, movement, tethering and fusion. RAB13 is involved in endocytic recycling and regulates the transport to the plasma membrane of transmembrane proteins like the tight junction protein OCLN/occludin. Thereby, it regulates the assembly and the activity of tight junctions. Moreover, it may also regulate tight junction assembly by activating the PKA signaling pathway and by reorganizing the actin cytoskeleton through the activation of the downstream effectors PRKACA and MICALL2 respectively. Through its role in tight junction assembly, may play a role in the establishment of Sertoli cell barrier. Plays also a role in angiogenesis through regulation of endothelial cells chemotaxis. Also involved in neurite outgrowth. Has also been proposed to play a role in post-Golgi membrane trafficking from the TGN to the recycling endosome. Finally, it has been involved in insulin-induced transport to the plasma membrane of the glucose transporter GLUT4 and therefore may play a role in glucose homeostasis. This chain is Ras-related protein Rab-13 (RAB13), found in Canis lupus familiaris (Dog).